A 223-amino-acid chain; its full sequence is Putative N-acetylmannosamine-6-phosphate 2-epimerase (223 aa).

Belongs to the NanE family.

It carries out the reaction an N-acyl-D-glucosamine 6-phosphate = an N-acyl-D-mannosamine 6-phosphate. It functions in the pathway amino-sugar metabolism; N-acetylneuraminate degradation; D-fructose 6-phosphate from N-acetylneuraminate: step 3/5. Functionally, converts N-acetylmannosamine-6-phosphate (ManNAc-6-P) to N-acetylglucosamine-6-phosphate (GlcNAc-6-P). The sequence is that of Putative N-acetylmannosamine-6-phosphate 2-epimerase from Staphylococcus haemolyticus (strain JCSC1435).